The primary structure comprises 78 residues: Large ribosomal subunit protein bL28 (78 aa).

A disordered region spans residues 1–21 (MSRVCQVTGKKPMVGNNRSHA).

The protein belongs to the bacterial ribosomal protein bL28 family.

The protein is Large ribosomal subunit protein bL28 of Shewanella baltica (strain OS223).